The chain runs to 425 residues: MTTAPHPAADGIWEHLRLMPGALADDSPVATNTEAAIVVTEGRIRWIGASAALPAGFSALPRFDGGGALVTPGLVDCHTHLVYGGQRANEFAMRLAGASYEEVAKAGGGIVSSVRATRAAGEDELFAQAAPRLEQLLADGVCAIEIKSGYGLALEHERKQLRVARRLGEAYGVTVRTTFLGAHALPPEYAGRSQDYIDLVCREMLPALAAEGLVDAVDVFCERIAFSLSETEQVFQAAQRLGLPVKLHAEQLSDMGGAALAARYGALSCDHIEHLSQAGIDAMRAAGTVAVLLPGAYYTLRDTHLPPIAALREAGVPMAVSTDHNPGTSPALSLLLMANMACTLFRLTVPEALAGITRHAARALGLQDTHGALGVGRPANFVLWQLNDSAELAYWLGQQAPRTIVRQGRVALDGLQIAPNARITP.

The Fe(3+) site is built by histidine 78 and histidine 80. The Zn(2+) site is built by histidine 78 and histidine 80. 4-imidazolone-5-propanoate-binding residues include arginine 87, tyrosine 150, and histidine 183. Tyrosine 150 provides a ligand contact to N-formimidoyl-L-glutamate. Histidine 248 contributes to the Fe(3+) binding site. Histidine 248 is a Zn(2+) binding site. Glutamine 251 is a 4-imidazolone-5-propanoate binding site. Position 323 (aspartate 323) interacts with Fe(3+). Aspartate 323 contributes to the Zn(2+) binding site. Asparagine 325 and glycine 327 together coordinate N-formimidoyl-L-glutamate. Threonine 328 provides a ligand contact to 4-imidazolone-5-propanoate.

This sequence belongs to the metallo-dependent hydrolases superfamily. HutI family. Zn(2+) serves as cofactor. Fe(3+) is required as a cofactor.

It is found in the cytoplasm. The enzyme catalyses 4-imidazolone-5-propanoate + H2O = N-formimidoyl-L-glutamate. The protein operates within amino-acid degradation; L-histidine degradation into L-glutamate; N-formimidoyl-L-glutamate from L-histidine: step 3/3. In terms of biological role, catalyzes the hydrolytic cleavage of the carbon-nitrogen bond in imidazolone-5-propanoate to yield N-formimidoyl-L-glutamate. It is the third step in the universal histidine degradation pathway. The sequence is that of Imidazolonepropionase from Polaromonas sp. (strain JS666 / ATCC BAA-500).